Here is a 696-residue protein sequence, read N- to C-terminus: Macrolide export ATP-binding/permease protein MacB (696 aa).

The 239-residue stretch at 6–244 (IELKNIERYH…KPQNKRTFID (239 aa)) folds into the ABC transporter domain. 42 to 49 (GASGSGKS) provides a ligand contact to ATP. A disordered region spans residues 254-287 (HNTEKLNRPNEKNNIDNDNKENNNGYNRNDNSFL). Over residues 255 to 274 (NTEKLNRPNEKNNIDNDNKE) the composition is skewed to basic and acidic residues. Over residues 275–284 (NNNGYNRNDN) the composition is skewed to low complexity. 4 helical membrane-spanning segments follow: residues 324–344 (FLTMLGIIIGIIAVVFVIALG), 576–596 (IAFISLIVGGIGIMNIMLVSV), 626–646 (MVSLIGGCIGVGCALLFGGLF), and 659–679 (LSSFLIAFLCSSMIGIVFGYF).

It belongs to the ABC transporter superfamily. Macrolide exporter (TC 3.A.1.122) family. In terms of assembly, homodimer. Part of the tripartite efflux system MacAB-TolC, which is composed of an inner membrane transporter, MacB, a periplasmic membrane fusion protein, MacA, and an outer membrane component, TolC. The complex forms a large protein conduit and can translocate molecules across both the inner and outer membranes. Interacts with MacA.

It localises to the cell inner membrane. Functionally, part of the tripartite efflux system MacAB-TolC. MacB is a non-canonical ABC transporter that contains transmembrane domains (TMD), which form a pore in the inner membrane, and an ATP-binding domain (NBD), which is responsible for energy generation. Confers resistance against macrolides. This is Macrolide export ATP-binding/permease protein MacB from Haemophilus ducreyi (strain 35000HP / ATCC 700724).